A 367-amino-acid polypeptide reads, in one-letter code: Phosphoribosylaminoimidazole-succinocarboxamide synthase (367 aa).

The protein belongs to the SAICAR synthetase family.

It carries out the reaction 5-amino-1-(5-phospho-D-ribosyl)imidazole-4-carboxylate + L-aspartate + ATP = (2S)-2-[5-amino-1-(5-phospho-beta-D-ribosyl)imidazole-4-carboxamido]succinate + ADP + phosphate + 2 H(+). It participates in purine metabolism; IMP biosynthesis via de novo pathway; 5-amino-1-(5-phospho-D-ribosyl)imidazole-4-carboxamide from 5-amino-1-(5-phospho-D-ribosyl)imidazole-4-carboxylate: step 1/2. This Shewanella baltica (strain OS223) protein is Phosphoribosylaminoimidazole-succinocarboxamide synthase.